The following is a 493-amino-acid chain: ATP synthase subunit beta, chloroplastic (493 aa).

Position 170–177 (170–177 (GGAGVGKT)) interacts with ATP.

It belongs to the ATPase alpha/beta chains family. In terms of assembly, F-type ATPases have 2 components, CF(1) - the catalytic core - and CF(0) - the membrane proton channel. CF(1) has five subunits: alpha(3), beta(3), gamma(1), delta(1), epsilon(1). CF(0) has four main subunits: a(1), b(1), b'(1) and c(9-12).

It is found in the plastid. It localises to the chloroplast thylakoid membrane. The catalysed reaction is ATP + H2O + 4 H(+)(in) = ADP + phosphate + 5 H(+)(out). In terms of biological role, produces ATP from ADP in the presence of a proton gradient across the membrane. The catalytic sites are hosted primarily by the beta subunits. This is ATP synthase subunit beta, chloroplastic from Staurastrum punctulatum (Green alga).